We begin with the raw amino-acid sequence, 235 residues long: Phosphatidylserine decarboxylase proenzyme (235 aa).

Ser204 (schiff-base intermediate with substrate; via pyruvic acid) is an active-site residue. Position 204 is a pyruvic acid (Ser); by autocatalysis (Ser204).

It belongs to the phosphatidylserine decarboxylase family. PSD-A subfamily. In terms of assembly, heterodimer of a large membrane-associated beta subunit and a small pyruvoyl-containing alpha subunit. The cofactor is pyruvate. In terms of processing, is synthesized initially as an inactive proenzyme. Formation of the active enzyme involves a self-maturation process in which the active site pyruvoyl group is generated from an internal serine residue via an autocatalytic post-translational modification. Two non-identical subunits are generated from the proenzyme in this reaction, and the pyruvate is formed at the N-terminus of the alpha chain, which is derived from the carboxyl end of the proenzyme. The post-translation cleavage follows an unusual pathway, termed non-hydrolytic serinolysis, in which the side chain hydroxyl group of the serine supplies its oxygen atom to form the C-terminus of the beta chain, while the remainder of the serine residue undergoes an oxidative deamination to produce ammonia and the pyruvoyl prosthetic group on the alpha chain.

The protein resides in the cell membrane. It carries out the reaction a 1,2-diacyl-sn-glycero-3-phospho-L-serine + H(+) = a 1,2-diacyl-sn-glycero-3-phosphoethanolamine + CO2. It functions in the pathway phospholipid metabolism; phosphatidylethanolamine biosynthesis; phosphatidylethanolamine from CDP-diacylglycerol: step 2/2. Catalyzes the formation of phosphatidylethanolamine (PtdEtn) from phosphatidylserine (PtdSer). In Mycobacterium sp. (strain KMS), this protein is Phosphatidylserine decarboxylase proenzyme.